We begin with the raw amino-acid sequence, 232 residues long: Uracil-DNA glycosylase (232 aa).

The Proton acceptor role is filled by aspartate 66.

It belongs to the uracil-DNA glycosylase (UDG) superfamily. UNG family.

It is found in the cytoplasm. It catalyses the reaction Hydrolyzes single-stranded DNA or mismatched double-stranded DNA and polynucleotides, releasing free uracil.. Functionally, excises uracil residues from the DNA which can arise as a result of misincorporation of dUMP residues by DNA polymerase or due to deamination of cytosine. In Lactobacillus helveticus (strain DPC 4571), this protein is Uracil-DNA glycosylase.